Here is a 194-residue protein sequence, read N- to C-terminus: 7-methyl-GTP pyrophosphatase (194 aa).

Asp-69 acts as the Proton acceptor in catalysis.

Belongs to the Maf family. YceF subfamily. Requires a divalent metal cation as cofactor.

It localises to the cytoplasm. It catalyses the reaction N(7)-methyl-GTP + H2O = N(7)-methyl-GMP + diphosphate + H(+). In terms of biological role, nucleoside triphosphate pyrophosphatase that hydrolyzes 7-methyl-GTP (m(7)GTP). May have a dual role in cell division arrest and in preventing the incorporation of modified nucleotides into cellular nucleic acids. This is 7-methyl-GTP pyrophosphatase (yceF1) from Shigella boydii serotype 4 (strain Sb227).